A 552-amino-acid polypeptide reads, in one-letter code: Phosphoglucomutase (552 aa).

Ser143 serves as the catalytic Phosphoserine intermediate. 4 residues coordinate Mg(2+): Ser143, Asp295, Asp297, and Asp299.

This sequence belongs to the phosphohexose mutase family. Requires Mg(2+) as cofactor.

The enzyme catalyses alpha-D-glucose 1-phosphate = alpha-D-glucose 6-phosphate. It functions in the pathway glycolipid metabolism; diglucosyl-diacylglycerol biosynthesis. In terms of biological role, catalyzes the interconversion between glucose-6-phosphate and alpha-glucose-1-phosphate. This is the first step in the biosynthesis of diglucosyl-diacylglycerol (Glc2-DAG), i.e. the predominant glycolipid found in the S.aureus membrane, which is also used as a membrane anchor for lipoteichoic acid (LTA). This chain is Phosphoglucomutase (pgcA), found in Staphylococcus aureus (strain MSSA476).